Here is a 230-residue protein sequence, read N- to C-terminus: Small ribosomal subunit protein uS2 (230 aa).

This sequence belongs to the universal ribosomal protein uS2 family.

This chain is Small ribosomal subunit protein uS2, found in Prochlorococcus marinus (strain NATL2A).